Reading from the N-terminus, the 629-residue chain is Pentatricopeptide repeat-containing protein At1g63150 (629 aa).

PPR repeat units follow at residues 46-81 (ASGDYREILRNRLSDIIKVDDAVDLFGDMVKSRPFP), 82-116 (SIVEFNKLLSAVAKMNKFELVISLGEQMQTLGISH), 117-151 (DLYTYSIFINCFCRRSQLSLALAVLAKMMKLGYEP), 152-186 (DIVTLSSLLNGYCHSKRISDAVALVDQMVEMGYKP), 187-221 (DTFTFTTLIHGLFLHNKASEAVALVDQMVQRGCQP), 222-256 (DLVTYGTVVNGLCKRGDIDLALNLLNKMEAARIKA), 257-291 (NVVIFNTIIDSLCKYRHVEVAVDLFTEMETKGIRP), 292-326 (NVVTYNSLINCLCNYGRWSDASRLLSNMLEKKINP), 327-361 (NVVTFNALIDAFFKEGKLVEAEKLHEEMIQRSIDP), 362-396 (DTITYNLLINGFCMHNRLDEAKQMFKFMVSKDCLP), 397-431 (NIQTYNTLINGFCKCKRVEDGVELFREMSQRGLVG), 432-466 (NTVTYTTIIQGFFQAGDCDSAQMVFKQMVSNRVPT), 467-501 (DIMTYSILLHGLCSYGKLDTALVIFKYLQKSEMEL), 502-532 (NIFIYNTMIEGMCKAGKVGEAWDLFCSLSIK), 534-568 (DVVTYNTMISGLCSKRLLQEADDLFRKMKEDGTLP), and 569-603 (NSGTYNTLIRANLRDCDRAASAELIKEMRSSGFVG).

It belongs to the PPR family. P subfamily.

In Arabidopsis thaliana (Mouse-ear cress), this protein is Pentatricopeptide repeat-containing protein At1g63150.